Here is a 335-residue protein sequence, read N- to C-terminus: Probable E3 ubiquitin-protein ligase BAH1-like (335 aa).

The SPX domain occupies 1 to 163 (MKFGETFTEY…SSENGKNFKL (163 aa)). The segment at 231-280 (CAICLETVFNPYALKCGHIFCNSCACSAASVLIFQGIKAAPRHSKCPICR) adopts an RING-type zinc-finger fold.

It belongs to the RING-type zinc finger family.

It catalyses the reaction S-ubiquitinyl-[E2 ubiquitin-conjugating enzyme]-L-cysteine + [acceptor protein]-L-lysine = [E2 ubiquitin-conjugating enzyme]-L-cysteine + N(6)-ubiquitinyl-[acceptor protein]-L-lysine.. The protein operates within protein modification; protein ubiquitination. The protein is Probable E3 ubiquitin-protein ligase BAH1-like (RF178) of Arabidopsis thaliana (Mouse-ear cress).